The primary structure comprises 371 residues: Glutamate 5-kinase (371 aa).

Residue lysine 14 participates in ATP binding. Serine 54, aspartate 141, and asparagine 153 together coordinate substrate. 173 to 174 (TD) contacts ATP. A PUA domain is found at 280-357 (AGSLIVDAGA…SDIEQLLGYI (78 aa)).

The protein belongs to the glutamate 5-kinase family.

The protein resides in the cytoplasm. The enzyme catalyses L-glutamate + ATP = L-glutamyl 5-phosphate + ADP. It functions in the pathway amino-acid biosynthesis; L-proline biosynthesis; L-glutamate 5-semialdehyde from L-glutamate: step 1/2. Its function is as follows. Catalyzes the transfer of a phosphate group to glutamate to form L-glutamate 5-phosphate. This is Glutamate 5-kinase from Azoarcus sp. (strain BH72).